The chain runs to 354 residues: Probable serine acetyltransferase 2 (354 aa).

Belongs to the transferase hexapeptide repeat family. In terms of assembly, homomultimer.

It carries out the reaction L-serine + acetyl-CoA = O-acetyl-L-serine + CoA. It functions in the pathway amino-acid biosynthesis; L-cysteine biosynthesis; L-cysteine from L-serine: step 1/2. The protein is Probable serine acetyltransferase 2 (SAT2) of Oryza sativa subsp. japonica (Rice).